We begin with the raw amino-acid sequence, 823 residues long: Dolichyl-diphosphooligosaccharide--protein glycosyltransferase subunit STT3B (823 aa).

A disordered region spans residues 1 to 58; the sequence is MAEPSAPESKHKSSLNSSPWSGLMALGNSRHGHHGPGTQSASSAAAPKPGPPAGLSGG. Ala2 carries the post-translational modification N-acetylalanine. The Cytoplasmic portion of the chain corresponds to 2–41; it reads AEPSAPESKHKSSLNSSPWSGLMALGNSRHGHHGPGTQSA. Phosphoserine occurs at positions 13, 18, and 29. A helical membrane pass occupies residues 42-83; it reads SSAAAPKPGPPAGLSGGLSQPAGWQSLLSFTILFLAWLAGFS. Over 84–170 the chain is Lumenal; the sequence is SRLFAVIRFE…VHIRDVCVFL (87 aa). Residues 98–100 carry the DXD motif 1 motif; the sequence is EFD. Asp100 contacts Mn(2+). The helical transmembrane segment at 171 to 189 threads the bilayer; it reads APTFSGLTSISTFLLTREL. The Cytoplasmic portion of the chain corresponds to 190 to 191; that stretch reads WN. Residues 192–209 form a helical membrane-spanning segment; sequence QGAGLLAACFIAIVPGYI. Over 210–220 the chain is Lumenal; the sequence is SRSVAGSFDNE. 2 residues coordinate Mn(2+): Asp218 and Glu220. The DXD motif 2 signature appears at 218 to 220; sequence DNE. Residues 221 to 240 traverse the membrane as a helical segment; the sequence is GIAIFALQFTYYLWVKSVKT. Over 241–242 the chain is Cytoplasmic; it reads GS. A helical membrane pass occupies residues 243-257; sequence VFWTMCCCLSYFYMV. At 258-262 the chain is on the lumenal side; it reads SAWGG. The helical transmembrane segment at 263–279 threads the bilayer; sequence YVFIINLIPLHVFVLLL. Topologically, residues 280-284 are cytoplasmic; sequence MQRYS. The helical transmembrane segment at 285–310 threads the bilayer; the sequence is KRVYIAYSTFYIVGLILSMQIPFVGF. Residues 311–318 lie on the Lumenal side of the membrane; it reads QPIRTSEH. Residues 319–338 traverse the membrane as a helical segment; that stretch reads MAAAGVFALLQAYAFLQYLR. Over 339 to 347 the chain is Cytoplasmic; it reads DRLTKQEFQ. A helical transmembrane segment spans residues 348–368; it reads TLFFLGVSLAAGAVFLSVIYL. The Lumenal segment spans residues 369–407; the sequence is TYTGYIAPWSGRFYSLWDTGYAKIHIPIIASVSEHQPTT. The short motif at 399 to 402 is the SVSE motif element; the sequence is SVSE. A helical transmembrane segment spans residues 408–430; the sequence is WVSFFFDLHILVCTFPAGLWFCI. The Cytoplasmic segment spans residues 431-436; sequence KNINDE. The helical transmembrane segment at 437 to 453 threads the bilayer; sequence RVFVALYAISAVYFAGV. Topologically, residues 454–457 are lumenal; it reads MVRL. Residue Arg456 participates in dolichyl diphosphooligosaccharide binding. The helical transmembrane segment at 458–479 threads the bilayer; the sequence is MLTLTPVVCMLSAIAFSNVFEH. At 480-523 the chain is on the cytoplasmic side; that stretch reads YLGDDMKRENPPVEDSSDEDDKRNPGNLYDKAGKVRKHVTEQEK. A disordered region spans residues 487–526; the sequence is RENPPVEDSSDEDDKRNPGNLYDKAGKVRKHVTEQEKPEE. A phosphoserine mark is found at Ser495 and Ser496. The span at 517-526 shows a compositional bias: basic and acidic residues; that stretch reads HVTEQEKPEE. Residues 524–549 traverse the membrane as a helical segment; sequence PEEGLGPNIKSIVTMLMLMLLMMFAV. Residues 550-823 lie on the Lumenal side of the membrane; that stretch reads HCTWVTSNAY…KGKKTSKKTV (274 aa). Residues 601 to 603 form an interacts with target acceptor peptide in protein substrate region; that stretch reads WWD. The WWDYG motif motif lies at 601-605; the sequence is WWDYG. Tyr606 contributes to the dolichyl diphosphooligosaccharide binding site. Asn613 and Asn620 each carry an N-linked (GlcNAc...) asparagine glycan. Residue Asn624 is glycosylated (N-linked (GlcNAc...) (high mannose) asparagine). Residue Asn638 is glycosylated (N-linked (GlcNAc...) asparagine). Residues 668–675 carry the DK motif motif; sequence DINKFLWM.

This sequence belongs to the STT3 family. In terms of assembly, component of the oligosaccharyltransferase (OST) complex. There are 2 OST complexes, OST-A and OST-B, which contain STT3A or STT3B as catalytic subunit, respectively. OST-A and OST-B contain common core subunits RPN1, RPN2, OST48, OST4, DAD1 and TMEM258, and OST-B contains either MAGT1 or TUSC3 as specific accessory subunit. It depends on Mg(2+) as a cofactor. Mn(2+) is required as a cofactor.

It is found in the endoplasmic reticulum membrane. The enzyme catalyses a di-trans,poly-cis-dolichyl diphosphooligosaccharide + L-asparaginyl-[protein] = N(4)-(oligosaccharide-(1-&gt;4)-N-acetyl-beta-D-glucosaminyl-(1-&gt;4)-N-acetyl-beta-D-glucosaminyl)-L-asparaginyl-[protein] + a di-trans,poly-cis-dolichyl diphosphate + H(+). It functions in the pathway protein modification; protein glycosylation. Catalytic subunit of the oligosaccharyl transferase (OST) complex that catalyzes the initial transfer of a defined glycan (Glc(3)Man(9)GlcNAc(2) in eukaryotes) from the lipid carrier dolichol-pyrophosphate to an asparagine residue within an Asn-X-Ser/Thr consensus motif in nascent polypeptide chains, the first step in protein N-glycosylation. N-glycosylation occurs cotranslationally and the complex associates with the Sec61 complex at the channel-forming translocon complex that mediates protein translocation across the endoplasmic reticulum (ER). All subunits are required for a maximal enzyme activity. This subunit contains the active site and the acceptor peptide and donor lipid-linked oligosaccharide (LLO) binding pockets. STT3B is present in a small subset of OST complexes and mediates both cotranslational and post-translational N-glycosylation of target proteins: STT3B-containing complexes are required for efficient post-translational glycosylation and while they are less competent than STT3A-containing complexes for cotranslational glycosylation, they have the ability to mediate glycosylation of some nascent sites that are not accessible for STT3A. STT3B-containing complexes also act post-translationally and mediate modification of skipped glycosylation sites in unfolded proteins. Plays a role in ER-associated degradation (ERAD) pathway that mediates ubiquitin-dependent degradation of misfolded endoplasmic reticulum proteins by mediating N-glycosylation of unfolded proteins, which are then recognized by the ERAD pathway and targeted for degradation. The chain is Dolichyl-diphosphooligosaccharide--protein glycosyltransferase subunit STT3B from Mus musculus (Mouse).